The primary structure comprises 734 residues: Protein SKG6 (734 aa).

The segment at 30-68 is disordered; it reads TRRDDSDSSSSSASSTKNSKSAECTGSKQQCQLPTDSSH. The segment covering 37-51 has biased composition (low complexity); that stretch reads SSSSSASSTKNSKSA. Over residues 53–68 the composition is skewed to polar residues; it reads CTGSKQQCQLPTDSSH. A helical membrane pass occupies residues 72–96; it reads VTVGVAVAVPVGVIIIVLAVILCIV. Phosphoserine is present on serine 137. Threonine 169 is modified (phosphothreonine). A phosphoserine mark is found at serine 191, serine 193, and serine 219. Threonine 221 is modified (phosphothreonine). Phosphoserine is present on residues serine 222 and serine 251. The interval 239–327 is disordered; that stretch reads RFQESESFRS…LRFGKDDDNY (89 aa). A compositionally biased stretch (polar residues) spans 253–273; it reads IHNNQLSRGSATEGANKQFTF. A compositionally biased stretch (low complexity) spans 280–299; it reads SSSVSEEAEVLNESNESASN. Residues 309-327 show a composition bias toward basic and acidic residues; it reads SSEKTHERNLRFGKDDDNY. Position 369 is a phosphoserine (serine 369). The interval 647–671 is disordered; sequence DLTAKPSYKPAGSFRSVSATNSRNN. The segment covering 661–671 has biased composition (polar residues); sequence RSVSATNSRNN. Residues serine 672 and serine 717 each carry the phosphoserine modification. The tract at residues 707–734 is disordered; the sequence is SVGGILPHSGSQDDLRKQLGSSHNYTVN. Over residues 725-734 the composition is skewed to polar residues; the sequence is LGSSHNYTVN.

It belongs to the SKG6/TOS2 family. Interacts with ZDS1 and ZDS2. In terms of processing, phosphorylated by CDC28.

The protein localises to the membrane. Its function is as follows. May be involved in the polarity establishment process. Suppresses the lethality of KEX2-GAS1 double null mutant when overexpressed. The protein is Protein SKG6 (SKG6) of Saccharomyces cerevisiae (strain ATCC 204508 / S288c) (Baker's yeast).